The sequence spans 456 residues: Probable tRNA(Ile)-lysidine synthase (456 aa).

30–35 serves as a coordination point for ATP; sequence SGGVDS.

It belongs to the tRNA(Ile)-lysidine synthase family.

The protein localises to the cytoplasm. It catalyses the reaction cytidine(34) in tRNA(Ile2) + L-lysine + ATP = lysidine(34) in tRNA(Ile2) + AMP + diphosphate + H(+). Its function is as follows. Ligates lysine onto the cytidine present at position 34 of the AUA codon-specific tRNA(Ile) that contains the anticodon CAU, in an ATP-dependent manner. Cytidine is converted to lysidine, thus changing the amino acid specificity of the tRNA from methionine to isoleucine. The sequence is that of Probable tRNA(Ile)-lysidine synthase from Schizosaccharomyces pombe (strain 972 / ATCC 24843) (Fission yeast).